We begin with the raw amino-acid sequence, 251 residues long: CDP-diacylglycerol pyrophosphatase (251 aa).

Residues 4–24 (AGLLFLVMIVIAVVAAGIGYW) form a helical membrane-spanning segment.

This sequence belongs to the Cdh family.

It is found in the cell inner membrane. It catalyses the reaction a CDP-1,2-diacyl-sn-glycerol + H2O = a 1,2-diacyl-sn-glycero-3-phosphate + CMP + 2 H(+). It functions in the pathway phospholipid metabolism; CDP-diacylglycerol degradation; phosphatidate from CDP-diacylglycerol: step 1/1. In Escherichia coli O81 (strain ED1a), this protein is CDP-diacylglycerol pyrophosphatase.